A 636-amino-acid chain; its full sequence is MHSLSLRRLLTSVLSLCSCSSALPNQRRSNVTSHVETYYSVDGATHAEKSKALKADGYRIVSLSSYGSPDSANYAAIWVQEEGPSFEIIHDADEATYNSWLQTWKSRGYVSTQVSATGPAENAVFAGVMENINVANWFQSCELENPWAFSNTTGNVDVVVKGFRMFGTPEERRYCILGHENVGNEQTTIQYSTPSFTVNFASTFEAETTKRFWRPSRLFLSEDHIITPSFADTSVGKWSHAVDLTKAELKEKIETERAKGLYPIDIQGGGSGSSERFTVVFAERTSPKPRQWNVRGEITGFEDNKAAEEEVDSIMRRFMEKNGVRQAQFAVALEGKTIAERSYTWAEDDRAIVEPDDIFLLASVSKMFLHASIDWLVSHDMLNFSTPVYDLLGYKPADSRANDINVQHLLDHSAGYDRSMSGDPSFMFREIAQSLPTKGAKAATLRDVIEYVVAKPLDFTPGDYSAYSNYCPMLLSYVVTNITGVPYLDFLEKNILDGLNVRLYETAASKHTEDRIVQESKNTGQDPVHPQSAKLVPGPHGGDGAVKEECAGTFAMAASASSLAKFIGSHAVWGTGGRVSSNRDGSLSGARAYVESRGTIDWALTLNTREYISETEFDELRWYSLPDFLSAFPIAG.

A signal peptide spans 1 to 22 (MHSLSLRRLLTSVLSLCSCSSA). Residues Asn30 and Asn151 are each glycosylated (N-linked (GlcNAc...) asparagine). Cys141 and Cys175 are oxidised to a cystine. Ser363 is an active-site residue. Residues Asn383 and Asn481 are each glycosylated (N-linked (GlcNAc...) asparagine). The segment at 512 to 540 (TEDRIVQESKNTGQDPVHPQSAKLVPGPH) is disordered.

The protein belongs to the peptidase S12 family.

It localises to the secreted. It carries out the reaction a glycyl-glycyl-[protein] + H2O = N-terminal glycyl-[protein] + [protein]-C-terminal glycine. In terms of biological role, serine-type endopeptidase that cleaves Gly-Gly bonds in the polyglycine linker of host plant class IV chitinases to disrupt their chitin-binding, and thereby plays a role in lowering the defense responses of the host to the fungus. Degrades Z.mays Endochitinase A (CHIA) in vitro, although corn is not its host species. This Fusarium vanettenii (strain ATCC MYA-4622 / CBS 123669 / FGSC 9596 / NRRL 45880 / 77-13-4) (Fusarium solani subsp. pisi) protein is Polyglycine hydrolase.